The following is a 555-amino-acid chain: Lysine--tRNA ligase (555 aa).

The short motif at 37 to 45 is the 'HIGH' region element; sequence TSGRLHVGN. The 'KMSKS' region signature appears at 301 to 305; sequence AMSSS.

The protein belongs to the class-I aminoacyl-tRNA synthetase family.

The protein resides in the cytoplasm. It carries out the reaction tRNA(Lys) + L-lysine + ATP = L-lysyl-tRNA(Lys) + AMP + diphosphate. The polypeptide is Lysine--tRNA ligase (Methanopyrus kandleri (strain AV19 / DSM 6324 / JCM 9639 / NBRC 100938)).